Consider the following 333-residue polypeptide: Dehydrodolichyl diphosphate synthase complex subunit DHDDS (333 aa).

Residues D34, G35, R37, R38, and R85 each coordinate (2E,6E)-farnesyl diphosphate. 8 residues coordinate isopentenyl diphosphate: D34, G35, R37, R38, R85, R205, R211, and S213. D34 provides a ligand contact to Mg(2+).

This sequence belongs to the UPP synthase family. In terms of assembly, the active dehydrodolichyl diphosphate synthase complex is a heterotetramer composed of a dimer of heterodimer of DHDDS and NUS1. Interacts with NPC2. The cofactor is Mg(2+). As to expression, ubiquitous. Expressed at high levels in testis and kidney. Expressed in epididymis (at protein level).

The protein localises to the endoplasmic reticulum membrane. The enzyme catalyses n isopentenyl diphosphate + (2E,6E)-farnesyl diphosphate = a di-trans,poly-cis-polyprenyl diphosphate + n diphosphate. Its pathway is protein modification; protein glycosylation. It participates in lipid metabolism. With respect to regulation, activated by phospholipids including cardiolipin, phosphatidylcholine, phosphatidylethanolamine, phosphatidylinositol and phosphatidylserine. In terms of biological role, with NUS1, forms the dehydrodolichyl diphosphate synthase (DDS) complex, an essential component of the dolichol monophosphate (Dol-P) biosynthetic machinery. Both subunits contribute to enzymatic activity, i.e. condensation of multiple copies of isopentenyl pyrophosphate (IPP) to farnesyl pyrophosphate (FPP) to produce dehydrodolichyl diphosphate (Dedol-PP), a precursor of dolichol phosphate which is utilized as a sugar carrier in protein glycosylation in the endoplasmic reticulum (ER). Synthesizes long-chain polyprenols, mostly of C95 and C100 chain length. Regulates the glycosylation and stability of nascent NPC2, thereby promoting trafficking of LDL-derived cholesterol. The polypeptide is Dehydrodolichyl diphosphate synthase complex subunit DHDDS (Homo sapiens (Human)).